We begin with the raw amino-acid sequence, 137 residues long: Putative nucleoside diphosphate kinase (137 aa).

ATP is bound by residues phenylalanine 45, arginine 73, threonine 79, arginine 90, and asparagine 100. Histidine 103 acts as the Pros-phosphohistidine intermediate in catalysis.

The protein belongs to the NDK family. Mg(2+) serves as cofactor.

It carries out the reaction a 2'-deoxyribonucleoside 5'-diphosphate + ATP = a 2'-deoxyribonucleoside 5'-triphosphate + ADP. The enzyme catalyses a ribonucleoside 5'-diphosphate + ATP = a ribonucleoside 5'-triphosphate + ADP. Functionally, major role in the synthesis of nucleoside triphosphates other than ATP. The ATP gamma phosphate is transferred to the NDP beta phosphate via a ping-pong mechanism, using a phosphorylated active-site intermediate. The polypeptide is Putative nucleoside diphosphate kinase (NME2P1) (Homo sapiens (Human)).